The chain runs to 223 residues: GRF1-interacting factor 3 (223 aa).

Residues alanine 179–lysine 223 are disordered. Residues glycine 214 to lysine 223 are compositionally biased toward basic and acidic residues.

Belongs to the SS18 family. Interacts with GRF1. As to expression, predominantly expressed in shoot tips containing the shoot apical meristem (SAM) and flower buds. Also expressed in mature flowers.

In terms of biological role, transcription coactivator that plays a role in the regulation of cell expansion in leaf and cotyledons tissues. Component of a network formed by miR396, the GRFs and their interacting factors (GIFs) acting in the regulation of meristem function, at least partially through the control of cell proliferation. GIFs are involved in the positive regulation of cell proliferation of lateral organs in a functionally redundant manner. The protein is GRF1-interacting factor 3 (GIF3) of Arabidopsis thaliana (Mouse-ear cress).